The chain runs to 108 residues: MLTLYFLQCLQAPYILCTSFITLKIHNFFFFFQFTEIRKGGRGEKQKKKYRETEVEEELGKHSAYDGHLGWSTNNCGSTSNCTIRRSRNSTMVPRQAAQLSSILPKYM.

Residues 10 to 32 (LQAPYILCTSFITLKIHNFFFFF) form a helical membrane-spanning segment.

Its subcellular location is the membrane. This is an uncharacterized protein from Saccharomyces cerevisiae (strain ATCC 204508 / S288c) (Baker's yeast).